The primary structure comprises 118 residues: Secreted RxLR effector protein 143 (118 aa).

The signal sequence occupies residues 1–18 (MRHCAFLFRLFLIGYSCS). Basic and acidic residues predominate over residues 35-65 (DELPRAEQWDSDGKRILQADDPEHIPTEERG). The segment at 35 to 66 (DELPRAEQWDSDGKRILQADDPEHIPTEERGI) is disordered. A RxLR-dEER motif is present at residues 49–64 (RILQADDPEHIPTEER).

Belongs to the RxLR effector family.

Its subcellular location is the secreted. The protein resides in the host cell membrane. Secreted effector that completely suppresses the host cell death induced by cell death-inducing proteins. The chain is Secreted RxLR effector protein 143 from Plasmopara viticola (Downy mildew of grapevine).